The following is a 452-amino-acid chain: Probable E3 ubiquitin-protein ligase ARI15 (452 aa).

Positions serine 22–alanine 256 are TRIAD supradomain. Residues cysteine 26, cysteine 29, cysteine 54, histidine 56, cysteine 59, cysteine 62, cysteine 83, cysteine 88, cysteine 128, cysteine 133, cysteine 154, cysteine 156, cysteine 161, cysteine 164, histidine 169, cysteine 174, cysteine 208, cysteine 211, cysteine 229, cysteine 231, cysteine 236, cysteine 239, histidine 246, and cysteine 252 each coordinate Zn(2+). The RING-type 1 zinc-finger motif lies at cysteine 26–cysteine 88. Residues alanine 106–cysteine 174 form an IBR-type zinc finger. The segment at cysteine 208–cysteine 239 adopts an RING-type 2; atypical zinc-finger fold. A RanBP2-type zinc finger spans residues asparagine 414–serine 445.

It belongs to the RBR family. Ariadne subfamily. Zn(2+) is required as a cofactor. Ubiquitous.

The catalysed reaction is [E2 ubiquitin-conjugating enzyme]-S-ubiquitinyl-L-cysteine + [acceptor protein]-L-lysine = [E2 ubiquitin-conjugating enzyme]-L-cysteine + [acceptor protein]-N(6)-ubiquitinyl-L-lysine.. It functions in the pathway protein modification; protein ubiquitination. Its function is as follows. Might act as an E3 ubiquitin-protein ligase, or as part of E3 complex, which accepts ubiquitin from specific E2 ubiquitin-conjugating enzymes and then transfers it to substrates. This chain is Probable E3 ubiquitin-protein ligase ARI15 (ARI15), found in Arabidopsis thaliana (Mouse-ear cress).